Reading from the N-terminus, the 544-residue chain is Phosphoenolpyruvate carboxykinase (ATP) (544 aa).

Residue 246–253 (GLSGTGKT) coordinates ATP.

This sequence belongs to the phosphoenolpyruvate carboxykinase (ATP) family.

It carries out the reaction oxaloacetate + ATP = phosphoenolpyruvate + ADP + CO2. It participates in carbohydrate biosynthesis; gluconeogenesis. This is Phosphoenolpyruvate carboxykinase (ATP) (PCK1) from Candida glabrata (strain ATCC 2001 / BCRC 20586 / JCM 3761 / NBRC 0622 / NRRL Y-65 / CBS 138) (Yeast).